A 356-amino-acid polypeptide reads, in one-letter code: Phosphate acyltransferase (356 aa).

The protein belongs to the PlsX family. As to quaternary structure, homodimer. Probably interacts with PlsY.

It localises to the cytoplasm. The catalysed reaction is a fatty acyl-[ACP] + phosphate = an acyl phosphate + holo-[ACP]. It participates in lipid metabolism; phospholipid metabolism. Catalyzes the reversible formation of acyl-phosphate (acyl-PO(4)) from acyl-[acyl-carrier-protein] (acyl-ACP). This enzyme utilizes acyl-ACP as fatty acyl donor, but not acyl-CoA. The polypeptide is Phosphate acyltransferase (Mesorhizobium japonicum (strain LMG 29417 / CECT 9101 / MAFF 303099) (Mesorhizobium loti (strain MAFF 303099))).